A 352-amino-acid chain; its full sequence is Fe(3+) ions import ATP-binding protein FbpC 1 (352 aa).

One can recognise an ABC transporter domain in the interval 11 to 241 (VELKHITKRF…PASRFMASFM (231 aa)). An ATP-binding site is contributed by 43 to 50 (GPSGCGKT).

The protein belongs to the ABC transporter superfamily. Fe(3+) ion importer (TC 3.A.1.10) family. In terms of assembly, the complex is composed of two ATP-binding proteins (FbpC), two transmembrane proteins (FbpB) and a solute-binding protein (FbpA).

The protein localises to the cell inner membrane. The enzyme catalyses Fe(3+)(out) + ATP + H2O = Fe(3+)(in) + ADP + phosphate + H(+). Its function is as follows. Part of the ABC transporter complex FbpABC involved in Fe(3+) ions import. Responsible for energy coupling to the transport system. This is Fe(3+) ions import ATP-binding protein FbpC 1 from Pectobacterium atrosepticum (strain SCRI 1043 / ATCC BAA-672) (Erwinia carotovora subsp. atroseptica).